The primary structure comprises 814 residues: Echinoderm microtubule-associated protein-like 1 (814 aa).

Residues 31–72 are a coiled coil; sequence SMEVSDRIASLEQRVQMQEDDIQLLKSALADVVRRLNITEEQ. A disordered region spans residues 77 to 180; the sequence is NRKGPTKARP…ESKPKEPAFS (104 aa). Polar residues predominate over residues 92–101; sequence PLRTTVNNGT. Over residues 103 to 115 the composition is skewed to low complexity; sequence LPKKPSASLPAPS. The segment covering 127–137 has biased composition (polar residues); that stretch reads KSINRTSSSER. A compositionally biased stretch (basic and acidic residues) spans 142-152; that stretch reads GRRESSGDSKG. Low complexity predominate over residues 155–167; it reads NRTGSTSSSSSGK. The tandem atypical propeller in EMLs stretch occupies residues 175–814; that stretch reads KEPAFSPEEG…DTSIMQWRVI (640 aa). WD repeat units lie at residues 260 to 309, 314 to 357, 362 to 399, 408 to 445, 449 to 488, 492 to 529, 534 to 571, 577 to 612, 616 to 654, 663 to 700, 708 to 767, and 774 to 813; these read EQLQ…IWDS, TLHV…VWDW, RLAD…FWTL, QGLF…VWGK, RISY…SWNG, KLHK…LQGT, FTPI…LWDA, VWDK…VFDT, DLVT…IYGV, RVGK…YWVP, SVET…LFSY, and APSH…QWRV.

It belongs to the WD repeat EMAP family. Homotrimer; self-association is mediated by the N-terminal coiled coil. Does not interact with EML3. Binds unpolymerized tubulins via its WD repeat region. Binds repolymerizing microtubules. Interacts with TASOR. In terms of tissue distribution, detected in adult brain cortex, hippocampus and thalamus. Expressed in the stomach, lungs and in Sertoli cells of the testis.

The protein resides in the cytoplasm. Its subcellular location is the perinuclear region. The protein localises to the cytoskeleton. In terms of biological role, modulates the assembly and organization of the microtubule cytoskeleton, and probably plays a role in regulating the orientation of the mitotic spindle and the orientation of the plane of cell division. Required for normal proliferation of neuronal progenitor cells in the developing brain and for normal brain development. Does not affect neuron migration per se. In Mus musculus (Mouse), this protein is Echinoderm microtubule-associated protein-like 1 (Eml1).